Reading from the N-terminus, the 380-residue chain is E3 ubiquitin-protein ligase Iruka (380 aa).

Residues 50 to 92 (APEMDSSTAGASGSARSGSSGSGSSGSHDTLSRGSSSSGSQVN) are disordered. Low complexity-rich tracts occupy residues 55 to 68 (SSTA…RSGS) and 74 to 89 (SGSH…SSGS). Residues 253–294 (CSICWDDFKIDETVRKLPCSHLYHENCIVPWLNLHSTCPICR) form an RING-type; atypical zinc finger. The interval 317 to 367 (EMAADGSNSERRSASTATGTDNPSPANNPSQAAAEGGRTRPDANPAQAARN) is disordered. The span at 338-350 (NPSPANNPSQAAA) shows a compositional bias: low complexity.

In terms of assembly, interacts (via N-terminus) with CG7546 (via Ubl domain).

The catalysed reaction is S-ubiquitinyl-[E2 ubiquitin-conjugating enzyme]-L-cysteine + [acceptor protein]-L-lysine = [E2 ubiquitin-conjugating enzyme]-L-cysteine + N(6)-ubiquitinyl-[acceptor protein]-L-lysine.. The protein operates within protein modification; protein ubiquitination. Its function is as follows. E3 ubiquitin-protein ligase that mediates E2-dependent, 'Lys-48'- and/or 'Lys-63'-linked polyubiquitination of substrates. Recognizes miRNA-empty Ago1 and triggers its degradation via polyubiquitination independently of the Bag6 complex. By targeting miRNA-empty Ago1, eliminates dysfunctional Ago1 not able to bind miRNA and thereby plays a role in the quality control of miRNA-mediated silencing. This Drosophila melanogaster (Fruit fly) protein is E3 ubiquitin-protein ligase Iruka.